A 140-amino-acid polypeptide reads, in one-letter code: Putative pre-16S rRNA nuclease (140 aa).

The protein belongs to the YqgF nuclease family.

It localises to the cytoplasm. In terms of biological role, could be a nuclease involved in processing of the 5'-end of pre-16S rRNA. The chain is Putative pre-16S rRNA nuclease from Aeromonas hydrophila subsp. hydrophila (strain ATCC 7966 / DSM 30187 / BCRC 13018 / CCUG 14551 / JCM 1027 / KCTC 2358 / NCIMB 9240 / NCTC 8049).